A 438-amino-acid chain; its full sequence is GTPase Obg (438 aa).

Residues 2–160 enclose the Obg domain; it reads NMFVDQIKIE…HYLELELKML (159 aa). The OBG-type G domain maps to 161 to 337; the sequence is ADVGLIGFPS…LMQLTADLLD (177 aa). GTP is bound by residues 167–174, 192–196, 214–217, 284–287, and 318–320; these read GFPSVGKS, FTTLT, DMPG, TKMD, and SAV. Positions 174 and 194 each coordinate Mg(2+). An OCT domain is found at 360–438; it reads PDKKDEADFT…IEKFVFEFIQ (79 aa).

This sequence belongs to the TRAFAC class OBG-HflX-like GTPase superfamily. OBG GTPase family. As to quaternary structure, monomer. Mg(2+) serves as cofactor.

Its subcellular location is the cytoplasm. In terms of biological role, an essential GTPase which binds GTP, GDP and possibly (p)ppGpp with moderate affinity, with high nucleotide exchange rates and a fairly low GTP hydrolysis rate. Plays a role in control of the cell cycle, stress response, ribosome biogenesis and in those bacteria that undergo differentiation, in morphogenesis control. This Limosilactobacillus reuteri (strain DSM 20016) (Lactobacillus reuteri) protein is GTPase Obg.